The primary structure comprises 85 residues: Large ribosomal subunit protein bL27 (85 aa).

The disordered stretch occupies residues 1 to 21 (MAHKKAGGSTRNGRDSESKRL).

The protein belongs to the bacterial ribosomal protein bL27 family.

The protein is Large ribosomal subunit protein bL27 of Photorhabdus laumondii subsp. laumondii (strain DSM 15139 / CIP 105565 / TT01) (Photorhabdus luminescens subsp. laumondii).